The primary structure comprises 348 residues: Chitinase (348 aa).

The first 29 residues, 1–29 (MKLKKIIPAFPLLSTVAVGLWLTPTQASA), serve as a signal peptide directing secretion. A GH18 domain is found at 42–348 (KVLVGYWHNW…FATRYSNLVK (307 aa)). E161 serves as the catalytic Proton donor.

The protein belongs to the glycosyl hydrolase 18 family.

The protein resides in the secreted. It carries out the reaction Random endo-hydrolysis of N-acetyl-beta-D-glucosaminide (1-&gt;4)-beta-linkages in chitin and chitodextrins.. It functions in the pathway glycan degradation; chitin degradation. In terms of biological role, involved in chitin degradation. Catalyzes the cleavage of glycosidic linkages in chitooligosaccharides and in alpha- and beta-chitin. Its activity on chitooligosaccharides increases considerably with degrees of polymerization (the initial rate of hydrolysis for GlcNAc5 is about 130-fold higher than that for GlcNAc3). Its activity is greatly stimulated in the presence of the lytic chitin monooxygenase EfCBM33A, which attacks the crystalline structure of chitin and makes the polymer more accessible to the chitinase; combining the two enzymes leads to rapid and complete depolymerization of crystalline chitin, especially with beta-chitin as a substrate. Is likely involved in a chitin degradation pathway that allows E.faecalis V583 to grow on chitin as a carbon source. This chain is Chitinase, found in Enterococcus faecalis (strain ATCC 700802 / V583).